Reading from the N-terminus, the 210-residue chain is Dephospho-CoA kinase (210 aa).

The DPCK domain occupies 18-210; it reads RIGITGGIAS…LSYPQVEVLL (193 aa). 26 to 31 provides a ligand contact to ATP; the sequence is ASGKTS.

The protein belongs to the CoaE family.

The protein localises to the cytoplasm. It carries out the reaction 3'-dephospho-CoA + ATP = ADP + CoA + H(+). It functions in the pathway cofactor biosynthesis; coenzyme A biosynthesis; CoA from (R)-pantothenate: step 5/5. Functionally, catalyzes the phosphorylation of the 3'-hydroxyl group of dephosphocoenzyme A to form coenzyme A. The sequence is that of Dephospho-CoA kinase from Prochlorococcus marinus (strain SARG / CCMP1375 / SS120).